The sequence spans 373 residues: Bifunctional enzyme IspD/IspF (373 aa).

Residues 1-213 (MSDLTLVLLG…CLQKPSATKR (213 aa)) form a 2-C-methyl-D-erythritol 4-phosphate cytidylyltransferase region. Positions 213 to 373 (RIGNGLDVHA…TLHYFDWSEI (161 aa)) are 2-C-methyl-D-erythritol 2,4-cyclodiphosphate synthase. A divalent metal cation contacts are provided by Asp219 and His221. Residues 219–221 (DVH) and 245–246 (HS) each bind 4-CDP-2-C-methyl-D-erythritol 2-phosphate. A divalent metal cation is bound at residue His253. 4-CDP-2-C-methyl-D-erythritol 2-phosphate is bound by residues 267 to 269 (DIG), 272 to 276 (FPDSD), 343 to 346 (TTTE), Phe350, and Arg353.

This sequence in the N-terminal section; belongs to the IspD/TarI cytidylyltransferase family. IspD subfamily. In the C-terminal section; belongs to the IspF family. A divalent metal cation is required as a cofactor.

It carries out the reaction 2-C-methyl-D-erythritol 4-phosphate + CTP + H(+) = 4-CDP-2-C-methyl-D-erythritol + diphosphate. It catalyses the reaction 4-CDP-2-C-methyl-D-erythritol 2-phosphate = 2-C-methyl-D-erythritol 2,4-cyclic diphosphate + CMP. It participates in isoprenoid biosynthesis; isopentenyl diphosphate biosynthesis via DXP pathway; isopentenyl diphosphate from 1-deoxy-D-xylulose 5-phosphate: step 2/6. Its pathway is isoprenoid biosynthesis; isopentenyl diphosphate biosynthesis via DXP pathway; isopentenyl diphosphate from 1-deoxy-D-xylulose 5-phosphate: step 4/6. Its function is as follows. Bifunctional enzyme that catalyzes the formation of 4-diphosphocytidyl-2-C-methyl-D-erythritol from CTP and 2-C-methyl-D-erythritol 4-phosphate (MEP) (IspD), and catalyzes the conversion of 4-diphosphocytidyl-2-C-methyl-D-erythritol 2-phosphate (CDP-ME2P) to 2-C-methyl-D-erythritol 2,4-cyclodiphosphate (ME-CPP) with a corresponding release of cytidine 5-monophosphate (CMP) (IspF). This Nitratiruptor sp. (strain SB155-2) protein is Bifunctional enzyme IspD/IspF.